Consider the following 136-residue polypeptide: ATP synthase epsilon chain (136 aa).

Belongs to the ATPase epsilon chain family. As to quaternary structure, F-type ATPases have 2 components, CF(1) - the catalytic core - and CF(0) - the membrane proton channel. CF(1) has five subunits: alpha(3), beta(3), gamma(1), delta(1), epsilon(1). CF(0) has three main subunits: a, b and c.

The protein resides in the cell inner membrane. Functionally, produces ATP from ADP in the presence of a proton gradient across the membrane. In Agrobacterium fabrum (strain C58 / ATCC 33970) (Agrobacterium tumefaciens (strain C58)), this protein is ATP synthase epsilon chain.